Consider the following 137-residue polypeptide: Protein phosphatase 1 regulatory subunit 1B (137 aa).

A disordered region spans residues 1 to 137 (DPKDRKKIQF…EEEEEEEDSQ (137 aa)). Residue threonine 33 is modified to Phosphothreonine; by PKA. Residues 40–62 (LXEHSSPEEEASPHQRAAGEGHH) are compositionally biased toward basic and acidic residues. 2 positions are modified to phosphoserine: serine 44 and serine 45. Residue threonine 74 is modified to Phosphothreonine; by CDK5. Polar residues predominate over residues 88–99 (HLQSISNLGENQ). A Phosphoserine modification is found at serine 101. Residues 108 to 117 (GELRELGYPR) are compositionally biased toward basic and acidic residues. A compositionally biased stretch (acidic residues) spans 118–137 (EEEEEEEEDDEEEEEEEDSQ). The residue at position 136 (serine 136) is a Phosphoserine.

It belongs to the protein phosphatase inhibitor 1 family. In terms of processing, phosphorylation of Thr-33 is required for activity. Dopamine- and cyclic AMP-regulated neuronal phosphoprotein.

It is found in the cytoplasm. Inhibitor of protein-phosphatase 1. The chain is Protein phosphatase 1 regulatory subunit 1B (PPP1R1B) from Sus scrofa (Pig).